The following is a 249-amino-acid chain: MKLLLLDLDDTLLQDLPVSRAVLEDLGRKAGVEGFFARVKARAEALFREAPFYPWAEAIGHSALEALWARYSTPGLEALAAWAGPFRERVFREALEEAGGAPERARELAEAFFRERRRYPLYPEAEAFLAEARRRGLALALLTNGVPDLQREKLVGAGLAHHFSLVLISGEVGIGKPDPRLFRMALCAFGVAPEEAAMVGDNPQKDVRGARLAGVRAVWVDRGLRPEDPEASPDLRVGDLREVFLAEAL.

It belongs to the HAD-like hydrolase superfamily. In terms of assembly, homodimer. Mg(2+) serves as cofactor. The cofactor is Co(2+).

It catalyses the reaction O-phospho-L-serine + H2O = L-serine + phosphate. The enzyme catalyses O-phospho-D-serine + H2O = D-serine + phosphate. It functions in the pathway amino-acid biosynthesis; L-serine biosynthesis; L-serine from 3-phospho-D-glycerate: step 3/3. Its function is as follows. Catalyzes the last step of the phosphorylated serine biosynthetic pathway, i.e. dephosphorylation of O-phospho-L-serine to form L-serine. Is also able to dephosphorylate O-phospho-D-serine with similar efficiency. Displays a poor activity on L-phosphothreonine, and cannot use L-phosphotyrosine, pyridoxal phosphate, glucose 6-phosphate, or fructose 6-phosphate as substrates. The sequence is that of Phosphoserine phosphatase from Thermus thermophilus (strain ATCC BAA-163 / DSM 7039 / HB27).